The chain runs to 166 residues: Endoribonuclease YbeY (166 aa).

The Zn(2+) site is built by His130, His134, and His140.

This sequence belongs to the endoribonuclease YbeY family. It depends on Zn(2+) as a cofactor.

Its subcellular location is the cytoplasm. In terms of biological role, single strand-specific metallo-endoribonuclease involved in late-stage 70S ribosome quality control and in maturation of the 3' terminus of the 16S rRNA. This Streptococcus uberis (strain ATCC BAA-854 / 0140J) protein is Endoribonuclease YbeY.